The sequence spans 345 residues: Src kinase-associated phosphoprotein 1 (345 aa).

Residues 109-212 (KIFKQGYLER…WVEQIQFLVK (104 aa)) form the PH domain. The disordered stretch occupies residues 226–274 (ETYDDIESTESSPVVGLTNDSENSLQEDDVYESIPGDEETEESEDENYE). Over residues 250-272 (LQEDDVYESIPGDEETEESEDEN) the composition is skewed to acidic residues. The 62-residue stretch at 283–344 (FYGDYYQGLW…PKDYLTLAFD (62 aa)) folds into the SH3 domain.

It belongs to the SKAP family. Homodimer. Post-translationally, phosphorylated on tyrosines.

It localises to the cytoplasm. Its subcellular location is the nucleus. The protein resides in the cell membrane. Positively regulates T-cell receptor signaling. Required for optimal conjugation between T-cells and antigen-presenting cells. This Xenopus tropicalis (Western clawed frog) protein is Src kinase-associated phosphoprotein 1 (skap1).